Reading from the N-terminus, the 934-residue chain is Serine/threonine-protein kinase atg1 (934 aa).

The Protein kinase domain maps to 22–328 (YTRLDEIGRG…SDFFDCDTIT (307 aa)). ATP-binding positions include 28–36 (IGRGSFATV) and K51. D165 (proton acceptor) is an active-site residue. Disordered regions lie at residues 335–432 (IADD…PRRP), 462–481 (RNTY…TKEE), 531–580 (RRPG…YGQS), 684–703 (TDPS…TDLT), 800–822 (RLPP…GSGA), and 878–900 (EEEE…RRDG). The segment covering 340–368 (PSTSRRSSVAVNTSGSTSRPQSRTGSRTP) has biased composition (polar residues). Residues 371-386 (MKREKDASYPGKKDDQ) show a composition bias toward basic and acidic residues. Low complexity predominate over residues 538 to 550 (SSTATATSPLATT). Residues 561-577 (ARADSTHTRQGSYERRY) are compositionally biased toward basic and acidic residues.

It belongs to the protein kinase superfamily. Ser/Thr protein kinase family. APG1/unc-51/ULK1 subfamily. In terms of assembly, homodimer. Forms a ternary complex with ATG13 and ATG17.

It localises to the cytoplasm. Its subcellular location is the preautophagosomal structure membrane. It carries out the reaction L-seryl-[protein] + ATP = O-phospho-L-seryl-[protein] + ADP + H(+). The enzyme catalyses L-threonyl-[protein] + ATP = O-phospho-L-threonyl-[protein] + ADP + H(+). Functionally, serine/threonine protein kinase involved in the cytoplasm to vacuole transport (Cvt) and found to be essential in autophagy, where it is required for the formation of autophagosomes. Involved in the clearance of protein aggregates which cannot be efficiently cleared by the proteasome. Required for selective autophagic degradation of the nucleus (nucleophagy) as well as for mitophagy which contributes to regulate mitochondrial quantity and quality by eliminating the mitochondria to a basal level to fulfill cellular energy requirements and preventing excess ROS production. Also involved in endoplasmic reticulum-specific autophagic process, in selective removal of ER-associated degradation (ERAD) substrates. Plays a key role in ATG9 and ATG23 cycling through the pre-autophagosomal structure and is necessary to promote ATG18 binding to ATG9 through phosphorylation of ATG9. Catalyzes phosphorylation of ATG4, decreasing the interaction between ATG4 and ATG8 and impairing deconjugation of PE-conjugated forms of ATG8. Required for conidiation and development of aerial hyphae. This Aspergillus oryzae (strain ATCC 42149 / RIB 40) (Yellow koji mold) protein is Serine/threonine-protein kinase atg1.